The sequence spans 150 residues: Avidin-related protein 6 (150 aa).

Positions 1–24 are cleaved as a signal peptide; sequence MVHATSPLLLLLLLSLALVAPGLS. The region spanning 26–147 is the Avidin-like domain; it reads RKCSLTGEWD…GYNNFTRQRT (122 aa). The cysteines at positions 28 and 105 are disulfide-linked. Biotin contacts are provided by N36 and S40. The N-linked (GlcNAc...) asparagine glycan is linked to N54. Biotin contacts are provided by Y57, T59, and D63. A glycan (N-linked (GlcNAc...) asparagine) is linked at N93. Biotin-binding residues include S95, S99, and N140. N141 carries N-linked (GlcNAc...) asparagine glycosylation.

The protein belongs to the avidin/streptavidin family. Homotetramer. Post-translationally, glycosylated.

It is found in the secreted. Its function is as follows. Forms a strong non-covalent specific complex with biotin. In Gallus gallus (Chicken), this protein is Avidin-related protein 6 (AVR6).